The following is a 97-amino-acid chain: Co-chaperonin GroES (97 aa).

The protein belongs to the GroES chaperonin family. As to quaternary structure, heptamer of 7 subunits arranged in a ring. Interacts with the chaperonin GroEL.

It is found in the cytoplasm. Its function is as follows. Together with the chaperonin GroEL, plays an essential role in assisting protein folding. The GroEL-GroES system forms a nano-cage that allows encapsulation of the non-native substrate proteins and provides a physical environment optimized to promote and accelerate protein folding. GroES binds to the apical surface of the GroEL ring, thereby capping the opening of the GroEL channel. In Sodalis glossinidius (strain morsitans), this protein is Co-chaperonin GroES.